A 312-amino-acid polypeptide reads, in one-letter code: Malate dehydrogenase (312 aa).

NAD(+)-binding positions include 12 to 17 (GAGFTG) and aspartate 36. Positions 87 and 93 each coordinate substrate. NAD(+) is bound by residues asparagine 100 and 123-125 (LTN). Position 125 (asparagine 125) interacts with substrate. Serine 149 is subject to Phosphoserine. Arginine 156 contacts substrate. Residue histidine 180 is the Proton acceptor of the active site.

The protein belongs to the LDH/MDH superfamily. MDH type 3 family.

It catalyses the reaction (S)-malate + NAD(+) = oxaloacetate + NADH + H(+). Its function is as follows. Catalyzes the reversible oxidation of malate to oxaloacetate. In Geobacillus thermodenitrificans (strain NG80-2), this protein is Malate dehydrogenase.